The sequence spans 502 residues: ATP synthase subunit beta (502 aa).

153–160 (GGAGVGKT) contacts ATP.

This sequence belongs to the ATPase alpha/beta chains family. In terms of assembly, F-type ATPases have 2 components, CF(1) - the catalytic core - and CF(0) - the membrane proton channel. CF(1) has five subunits: alpha(3), beta(3), gamma(1), delta(1), epsilon(1). CF(0) has three main subunits: a(1), b(2) and c(9-12). The alpha and beta chains form an alternating ring which encloses part of the gamma chain. CF(1) is attached to CF(0) by a central stalk formed by the gamma and epsilon chains, while a peripheral stalk is formed by the delta and b chains.

It localises to the cell membrane. The catalysed reaction is ATP + H2O + 4 H(+)(in) = ADP + phosphate + 5 H(+)(out). In terms of biological role, produces ATP from ADP in the presence of a proton gradient across the membrane. The catalytic sites are hosted primarily by the beta subunits. This chain is ATP synthase subunit beta, found in Amoebophilus asiaticus (strain 5a2).